The following is a 380-amino-acid chain: Cytochrome b (380 aa).

The next 4 helical transmembrane spans lie at 33-53 (FGSLLGLCLATQILTGLFLAM), 77-98 (WLIRNIHANGASFFFICIYMHI), 113-133 (WNIGVVLLLLTMMTAFVGYVL), and 178-198 (FFAFHFLFPFVIAAATVLHLL). Heme b is bound by residues His-83 and His-97. Positions 182 and 196 each coordinate heme b. His-201 serves as a coordination point for a ubiquinone. A run of 4 helical transmembrane segments spans residues 226-246 (YKDLLGFVAMLLGLTSLALFA), 288-308 (LGGVLALLFSILVLMVVPILH), 320-340 (LTQFLFWTLVADMLILTWIGG), and 347-367 (FIIIGQVASVIYFTIFLVLAP).

It belongs to the cytochrome b family. The cytochrome bc1 complex contains 3 respiratory subunits (MT-CYB, CYC1 and UQCRFS1), 2 core proteins (UQCRC1 and UQCRC2) and probably 6 low-molecular weight proteins. Heme b is required as a cofactor.

The protein localises to the mitochondrion inner membrane. Its function is as follows. Component of the ubiquinol-cytochrome c reductase complex (complex III or cytochrome b-c1 complex) that is part of the mitochondrial respiratory chain. The b-c1 complex mediates electron transfer from ubiquinol to cytochrome c. Contributes to the generation of a proton gradient across the mitochondrial membrane that is then used for ATP synthesis. In Salmo trutta (Brown trout), this protein is Cytochrome b (mt-cyb).